The following is a 272-amino-acid chain: Lyso-glycine lipid O-acyltransferase (272 aa).

It belongs to the O-acyltransferase GlsA family.

The catalysed reaction is a lyso-glycine lipid + a fatty acyl-[ACP] = a glycine lipid + holo-[ACP]. The enzyme catalyses N-[(3R)-3-hydroxyhexadecanoyl]-glycine + hexadecanoyl-[ACP] = N-[(3R)-3-(hexadecanoyloxy)hexadecanoyl]-glycine + holo-[ACP]. It functions in the pathway lipid metabolism. Functionally, is involved in the production of glycine lipids (GL), which are phosphorus-free membrane lipids important for fitness during growth of the human gut bacterium B.thetaiotaomicron in vivo and in vitro. Catalyzes the second step of GL biosynthesis, i.e. the O-acylation of the hydroxyl group of lyso-glycine lipids, resulting in the production of the mature diacylated glycine lipids. The sequence is that of Lyso-glycine lipid O-acyltransferase from Bacteroides thetaiotaomicron (strain ATCC 29148 / DSM 2079 / JCM 5827 / CCUG 10774 / NCTC 10582 / VPI-5482 / E50).